A 229-amino-acid chain; its full sequence is Uracil-DNA glycosylase (229 aa).

Aspartate 71 (proton acceptor) is an active-site residue.

Belongs to the uracil-DNA glycosylase (UDG) superfamily. UNG family.

The protein localises to the cytoplasm. It carries out the reaction Hydrolyzes single-stranded DNA or mismatched double-stranded DNA and polynucleotides, releasing free uracil.. Excises uracil residues from the DNA which can arise as a result of misincorporation of dUMP residues by DNA polymerase or due to deamination of cytosine. The protein is Uracil-DNA glycosylase of Campylobacter lari (strain RM2100 / D67 / ATCC BAA-1060).